Reading from the N-terminus, the 152-residue chain is MFRGATLVNLDSKGRLSVPTRYREQLLENAAGQMVCTIDIHHPCLLLYPLPEWEIIEQKLPRLSSMNPVERRVQRLLLGHASECQMDGAGRLLIAPVLRQHAGLTKEVMLVGQFNKFELWDETTWHQQVKEDIDAEQLATGDLSERLQDLSL.

2 consecutive SpoVT-AbrB domains span residues 5–52 (ATLV…PLPE) and 81–124 (ASEC…DETT).

Belongs to the MraZ family. Forms oligomers.

The protein localises to the cytoplasm. It localises to the nucleoid. Negatively regulates its own expression and that of the subsequent genes in the proximal part of the division and cell wall (dcw) gene cluster. Acts by binding directly to DNA. May also regulate the expression of genes outside the dcw cluster. The sequence is that of Transcriptional regulator MraZ from Shigella dysenteriae serotype 1 (strain Sd197).